Reading from the N-terminus, the 703-residue chain is Protein teflon (703 aa).

Residues 32-55 form a C2H2-type 1 zinc finger; the sequence is MLCHFCKDIFTHLPEFMRHLQWSH. 4 disordered regions span residues 78-111, 140-161, 205-239, and 339-434; these read SSEDDVQSQANSCSSGDSGLAGEMEDADGEPGSS, EQSYSKNPPDSRTEGFRCARKP, NDVSKPRLNKLRSKLNNSLSSNISGPPKQSKMPSL, and SQQP…SKLE. The segment covering 84–94 has biased composition (polar residues); sequence QSQANSCSSGD. A compositionally biased stretch (basic and acidic residues) spans 148–161; the sequence is PDSRTEGFRCARKP. 2 stretches are compositionally biased toward polar residues: residues 339–352 and 364–373; these read SQQPSELNTTNNAV and SLTVISSSPI. 2 C2H2-type zinc fingers span residues 649–672 and 677–700; these read YFCECCEEIFPNEARYKKHVQSVH and FTCSECGKSFKRLYFYDKHLKTVH.

It belongs to the Teflon family.

It is found in the nucleus. It localises to the chromosome. Specifically required in males for proper segregation of autosomal bivalents at meiosis I. Expression is required in the male germ line prior to spermatocyte stage S4. May have a role as a bridging molecule maintaining adhesion to hold autosome bivalents together via heterochromatic connections. In Drosophila persimilis (Fruit fly), this protein is Protein teflon.